Consider the following 205-residue polypeptide: S-crystallin SL11 (205 aa).

The GST N-terminal domain occupies 2–80 (PSYTLYYFNG…YLAREFGFYG (79 aa)). Positions 82–205 (NNMDMFKVDC…YIKKRNNTAF (124 aa)) constitute a GST C-terminal domain.

Belongs to the GST superfamily. In terms of tissue distribution, lens.

Functionally, S-crystallins are structural components of squids and octopi eye lens. Contains relatively little if any GST activity. The polypeptide is S-crystallin SL11 (Nototodarus sloanii (Wellington flying squid)).